The chain runs to 455 residues: Ribulose bisphosphate carboxylase large chain (455 aa).

K5 is modified (N6,N6,N6-trimethyllysine). N114 and T164 together coordinate substrate. Residue K166 is the Proton acceptor of the active site. K168 lines the substrate pocket. Residues K192, D194, and E195 each contribute to the Mg(2+) site. Residue K192 is modified to N6-carboxylysine. H285 acts as the Proton acceptor in catalysis. Positions 286, 318, and 370 each coordinate substrate.

Belongs to the RuBisCO large chain family. Type I subfamily. As to quaternary structure, heterohexadecamer of 8 large chains and 8 small chains; disulfide-linked. The disulfide link is formed within the large subunit homodimers. Requires Mg(2+) as cofactor. In terms of processing, the disulfide bond which can form in the large chain dimeric partners within the hexadecamer appears to be associated with oxidative stress and protein turnover.

It is found in the plastid. It localises to the chloroplast. The catalysed reaction is 2 (2R)-3-phosphoglycerate + 2 H(+) = D-ribulose 1,5-bisphosphate + CO2 + H2O. The enzyme catalyses D-ribulose 1,5-bisphosphate + O2 = 2-phosphoglycolate + (2R)-3-phosphoglycerate + 2 H(+). In terms of biological role, ruBisCO catalyzes two reactions: the carboxylation of D-ribulose 1,5-bisphosphate, the primary event in carbon dioxide fixation, as well as the oxidative fragmentation of the pentose substrate in the photorespiration process. Both reactions occur simultaneously and in competition at the same active site. This chain is Ribulose bisphosphate carboxylase large chain, found in Lupinus nanus (Sky lupine).